A 207-amino-acid polypeptide reads, in one-letter code: Large ribosomal subunit protein uL4 (207 aa).

The tract at residues 49–78 is disordered; the sequence is HAVKNRSAVRGGGRKPWRQKGTGRARQGSI. A compositionally biased stretch (basic residues) spans 60–71; that stretch reads GGRKPWRQKGTG.

Belongs to the universal ribosomal protein uL4 family. As to quaternary structure, part of the 50S ribosomal subunit.

One of the primary rRNA binding proteins, this protein initially binds near the 5'-end of the 23S rRNA. It is important during the early stages of 50S assembly. It makes multiple contacts with different domains of the 23S rRNA in the assembled 50S subunit and ribosome. In terms of biological role, forms part of the polypeptide exit tunnel. This chain is Large ribosomal subunit protein uL4, found in Latilactobacillus sakei subsp. sakei (strain 23K) (Lactobacillus sakei subsp. sakei).